Consider the following 523-residue polypeptide: Acetyl-coenzyme A carboxylase carboxyl transferase subunit beta, chloroplastic (523 aa).

Positions 224–523 (FWVICENCHK…FVPSNQNSIK (300 aa)) constitute a CoA carboxyltransferase N-terminal domain. Residues Cys228, Cys231, Cys247, and Cys250 each contribute to the Zn(2+) site. The C4-type zinc finger occupies 228–250 (CENCHKFNYKRLFKSKMNICEEC).

It belongs to the AccD/PCCB family. As to quaternary structure, acetyl-CoA carboxylase is a heterohexamer composed of biotin carboxyl carrier protein, biotin carboxylase and 2 subunits each of ACCase subunit alpha and ACCase plastid-coded subunit beta (accD). Zn(2+) is required as a cofactor.

It localises to the plastid. It is found in the chloroplast stroma. It carries out the reaction N(6)-carboxybiotinyl-L-lysyl-[protein] + acetyl-CoA = N(6)-biotinyl-L-lysyl-[protein] + malonyl-CoA. Its pathway is lipid metabolism; malonyl-CoA biosynthesis; malonyl-CoA from acetyl-CoA: step 1/1. Functionally, component of the acetyl coenzyme A carboxylase (ACC) complex. Biotin carboxylase (BC) catalyzes the carboxylation of biotin on its carrier protein (BCCP) and then the CO(2) group is transferred by the transcarboxylase to acetyl-CoA to form malonyl-CoA. The protein is Acetyl-coenzyme A carboxylase carboxyl transferase subunit beta, chloroplastic of Cucumis sativus (Cucumber).